The chain runs to 189 residues: ComE operon protein 2 (189 aa).

The CMP/dCMP-type deaminase domain maps to 5–132; the sequence is SWNQYFMAQS…PYAQELFEQA (128 aa). H70 is a Zn(2+) binding site. Residue E72 is the Proton donor of the active site. 2 residues coordinate Zn(2+): C98 and C101.

This sequence belongs to the cytidine and deoxycytidylate deaminase family. Zn(2+) is required as a cofactor.

Functionally, dispensable for transformability. In Bacillus subtilis (strain 168), this protein is ComE operon protein 2 (comEB).